Consider the following 479-residue polypeptide: Anaerobic nitric oxide reductase flavorubredoxin (479 aa).

The segment at 30-210 (LRGSSYNSYL…PFSRLVTPKI (181 aa)) is zinc metallo-hydrolase. Fe cation-binding residues include H79, E81, D83, H147, D166, and H227. The Flavodoxin-like domain maps to 254–393 (ITIFYDTMSN…LCREHGREIA (140 aa)). FMN is bound by residues 260 to 264 (TMSNN) and 342 to 369 (AFGS…EMSL). Positions 423–474 (GPRMQCSVCQWIYDPAKGEPMQDVAPGTPWSEVPDNFLCPECSLGKDVFDEL) constitute a Rubredoxin-like domain. The Fe cation site is built by C428, C431, C461, and C464.

In the N-terminal section; belongs to the zinc metallo-hydrolase group 3 family. In terms of assembly, homotetramer. Fe cation serves as cofactor. FMN is required as a cofactor.

Its subcellular location is the cytoplasm. It functions in the pathway nitrogen metabolism; nitric oxide reduction. Its function is as follows. Anaerobic nitric oxide reductase; uses NADH to detoxify nitric oxide (NO), protecting several 4Fe-4S NO-sensitive enzymes. Has at least 2 reductase partners, only one of which (NorW, flavorubredoxin reductase) has been identified. NO probably binds to the di-iron center; electrons enter from the NorW at rubredoxin and are transferred sequentially to the FMN center and the di-iron center. Also able to function as an aerobic oxygen reductase. This chain is Anaerobic nitric oxide reductase flavorubredoxin, found in Escherichia coli (strain SMS-3-5 / SECEC).